We begin with the raw amino-acid sequence, 824 residues long: Leucine--tRNA ligase (824 aa).

The 'HIGH' region signature appears at 42–52 (PYPSGKIHMGH). A 'KMSKS' region motif is present at residues 581 to 585 (KMSKS). Lysine 584 contacts ATP.

This sequence belongs to the class-I aminoacyl-tRNA synthetase family.

It is found in the cytoplasm. It catalyses the reaction tRNA(Leu) + L-leucine + ATP = L-leucyl-tRNA(Leu) + AMP + diphosphate. The chain is Leucine--tRNA ligase from Geobacter sp. (strain M21).